The chain runs to 324 residues: Beta-ketoacyl-[acyl-carrier-protein] synthase III (324 aa).

Residue Cys-112 is part of the active site. The segment at 181–202 is disordered; the sequence is TDGSRGQNLTSGNNPLRSPFSD. Residues 184–196 show a composition bias toward polar residues; the sequence is SRGQNLTSGNNPL. His-249 is an active-site residue. An ACP-binding region spans residues 250–254; the sequence is QANRR. Residue Asn-279 is part of the active site.

This sequence belongs to the thiolase-like superfamily. FabH family. As to quaternary structure, homodimer.

The protein resides in the cytoplasm. The enzyme catalyses malonyl-[ACP] + acetyl-CoA + H(+) = 3-oxobutanoyl-[ACP] + CO2 + CoA. It participates in lipid metabolism; fatty acid biosynthesis. In terms of biological role, catalyzes the condensation reaction of fatty acid synthesis by the addition to an acyl acceptor of two carbons from malonyl-ACP. Catalyzes the first condensation reaction which initiates fatty acid synthesis and may therefore play a role in governing the total rate of fatty acid production. Possesses both acetoacetyl-ACP synthase and acetyl transacylase activities. Its substrate specificity determines the biosynthesis of branched-chain and/or straight-chain of fatty acids. The protein is Beta-ketoacyl-[acyl-carrier-protein] synthase III of Streptococcus uberis (strain ATCC BAA-854 / 0140J).